A 149-amino-acid polypeptide reads, in one-letter code: Limonene-1,2-epoxide hydrolase (149 aa).

Asp101 serves as the catalytic Proton donor. The active-site Proton acceptor is Asp132.

The protein belongs to the limonene-1,2-epoxide hydrolase family. As to quaternary structure, monomer.

It carries out the reaction limonene 1,2-epoxide + H2O = limonene-1,2-diol. It participates in terpene metabolism; (4R)-limonene degradation; (1S,4R)-1-hydroxylimonen-2-one from (4R)-limonene: step 2/3. In terms of biological role, catalyzes the conversion of limonene-1,2-epoxide to limonene-1,2-diol. Can use both the (-) and (+) isomers of limonene-1,2-epoxide as substrates and also has some activity with 1-methylcyclohexene oxide, cyclohexene oxide and indene oxide as substrates. In Rhodococcus erythropolis (Arthrobacter picolinophilus), this protein is Limonene-1,2-epoxide hydrolase (limA).